Here is a 181-residue protein sequence, read N- to C-terminus: ATP synthase subunit delta (181 aa).

The protein belongs to the ATPase delta chain family. F-type ATPases have 2 components, F(1) - the catalytic core - and F(0) - the membrane proton channel. F(1) has five subunits: alpha(3), beta(3), gamma(1), delta(1), epsilon(1). F(0) has three main subunits: a(1), b(2) and c(10-14). The alpha and beta chains form an alternating ring which encloses part of the gamma chain. F(1) is attached to F(0) by a central stalk formed by the gamma and epsilon chains, while a peripheral stalk is formed by the delta and b chains.

The protein localises to the cell inner membrane. In terms of biological role, f(1)F(0) ATP synthase produces ATP from ADP in the presence of a proton or sodium gradient. F-type ATPases consist of two structural domains, F(1) containing the extramembraneous catalytic core and F(0) containing the membrane proton channel, linked together by a central stalk and a peripheral stalk. During catalysis, ATP synthesis in the catalytic domain of F(1) is coupled via a rotary mechanism of the central stalk subunits to proton translocation. Its function is as follows. This protein is part of the stalk that links CF(0) to CF(1). It either transmits conformational changes from CF(0) to CF(1) or is implicated in proton conduction. The chain is ATP synthase subunit delta from Chlorobium phaeobacteroides (strain DSM 266 / SMG 266 / 2430).